The sequence spans 230 residues: MDANHDKVVESGSRGGRGPVRTICVFCGSRRGNRPSFSAAALDLGKQLVERELDLVYGGGSGGLMGLVSKTVHDGGRHVLGVIPSALLPEEVSGETLGEAKVVRDMHERKSEMAKHADAFIALPGGYGTIEELLEIIAWAQLGIHNKPVGLLNVDGYYNNLLSLFDKGVEEGFIDAAARNIFVLADNAGELLTKLTEAAAAAAAAVEGGDGDQVDGEATAAAAGLKRKRS.

Residues Glu91, 109–110 (RK), and 126–132 (GYGTIEE) contribute to the substrate site.

The protein belongs to the LOG family.

The enzyme catalyses N(6)-(dimethylallyl)adenosine 5'-phosphate + H2O = N(6)-dimethylallyladenine + D-ribose 5-phosphate. It catalyses the reaction 9-ribosyl-trans-zeatin 5'-phosphate + H2O = trans-zeatin + D-ribose 5-phosphate. Functionally, cytokinin-activating enzyme working in the direct activation pathway. Phosphoribohydrolase that converts inactive cytokinin nucleotides to the biologically active free-base forms. This is Probable cytokinin riboside 5'-monophosphate phosphoribohydrolase LOG4 (LOGL4) from Oryza sativa subsp. japonica (Rice).